The following is a 768-amino-acid chain: P-selectin (768 aa).

The N-terminal stretch at 1-41 (MAGCPKGSWKPRLRSVVLGAAQLIWLSALISELVNRKKVAT) is a signal peptide. Over 42–709 (WTYNYSTKAY…QAGTLTIQEA (668 aa)) the chain is Extracellular. N-linked (GlcNAc...) asparagine glycosylation is found at asparagine 45, asparagine 54, and asparagine 107. The C-type lectin domain maps to 58-158 (AFCKRHFTDL…PCFKRKRALC (101 aa)). Cystine bridges form between cysteine 60-cysteine 158, cysteine 131-cysteine 150, cysteine 168-cysteine 183, cysteine 185-cysteine 194, cysteine 200-cysteine 244, cysteine 230-cysteine 257, cysteine 262-cysteine 306, cysteine 292-cysteine 319, cysteine 324-cysteine 368, cysteine 354-cysteine 381, cysteine 386-cysteine 430, cysteine 416-cysteine 443, cysteine 448-cysteine 492, cysteine 478-cysteine 505, cysteine 510-cysteine 554, cysteine 540-cysteine 567, cysteine 580-cysteine 624, cysteine 610-cysteine 637, cysteine 642-cysteine 686, and cysteine 672-cysteine 699. Ca(2+) is bound by residues glutamate 121, asparagine 123, and asparagine 124. Asparagine 123 provides a ligand contact to a carbohydrate. Positions 133 and 146 each coordinate a carbohydrate. Positions 146 and 147 each coordinate Ca(2+). The EGF-like domain occupies 159–195 (YTASCQDMSCNSQGERIETIGSYTCSCYPGFYGPECE). 8 consecutive Sushi domains span residues 198-259 (QECG…QCKA), 260-321 (VQCQ…TCEA), 322-383 (IACE…VCEA), 384-445 (LQCQ…ECQA), 446-507 (VSCT…MCEA), 508-569 (IKCP…TCKG), 578-639 (VRCP…VCRA), and 640-701 (VKCS…TCQA). N-linked (GlcNAc...) asparagine glycosylation occurs at asparagine 212. An N-linked (GlcNAc...) asparagine glycan is attached at asparagine 347. Asparagine 456 carries N-linked (GlcNAc...) asparagine glycosylation. Residue asparagine 603 is glycosylated (N-linked (GlcNAc...) asparagine). Residues asparagine 654, asparagine 661, and asparagine 679 are each glycosylated (N-linked (GlcNAc...) asparagine). Residues 710-733 (LTYLGGALASTSGLAVGGTLLALL) traverse the membrane as a helical segment. The Cytoplasmic portion of the chain corresponds to 734–768 (RKRLRKKDDGKCPLNPHSHLGTYGVFTNAAYDPTP). A lipid anchor (S-palmitoyl cysteine; alternate) is attached at cysteine 745. Cysteine 745 carries S-stearoyl cysteine; alternate lipidation. The short motif at 756 to 759 (YGVF) is the Endocytosis signal element. Residues 759–768 (FTNAAYDPTP) form an interaction with SNX17 region.

The protein belongs to the selectin/LECAM family. In terms of assembly, interacts with SNX17. Interacts with SELPLG/PSGL1 and PODXL2 and mediates neutrophil adhesion and leukocyte rolling. This interaction requires the sialyl-Lewis X epitope of SELPLG and PODXL2, and specific tyrosine sulfation on SELPLG. Interacts (via C-type lectin domain) with alpha-IIb/beta3 integrin ITGA2B:ITGB3 and alpha-V/beta-3 integrin ITGAV:ITGB3. Interacts with alpha5/beta1 integrin ITGA5:ITGB1 and alpha4/beta1 integrin ITGA4:ITGB. In terms of tissue distribution, not detected in the absence of exposure to lipopolysaccharide (LPS). Detected only after exposure to lipopolysaccharide (LPS) in the tissues examined: spleen, lung, brain, liver, heart, kidney, thymus and small intestine.

Its subcellular location is the cell membrane. Its function is as follows. Ca(2+)-dependent receptor for myeloid cells that binds to carbohydrates on neutrophils and monocytes. Mediates the interaction of activated endothelial cells or platelets with leukocytes. The ligand recognized is sialyl-Lewis X. Mediates rapid rolling of leukocyte rolling over vascular surfaces during the initial steps in inflammation through interaction with SELPLG. Mediates cell-cell interactions and cell adhesion via the interaction with integrin alpha-IIb/beta3 (ITGA2B:ITGB3) and integrin alpha-V/beta-3 (ITGAV:ITGB3). The polypeptide is P-selectin (Selp) (Rattus norvegicus (Rat)).